Here is a 554-residue protein sequence, read N- to C-terminus: Raftlin (554 aa).

Glycine 2 carries the N-myristoyl glycine lipid modification. A lipid anchor (S-palmitoyl cysteine) is attached at cysteine 3. Serine 183 and serine 199 each carry phosphoserine. 3 disordered regions span residues 192 to 249 (CTLG…NEAG), 441 to 488 (KKRE…DQFS), and 504 to 554 (GRAS…TEAN). 2 stretches are compositionally biased toward basic and acidic residues: residues 198–209 (SSLENDTPKAAE) and 475–487 (QAEE…EDQF). Phosphoserine is present on residues serine 507 and serine 530. Over residues 526-542 (HNRDSVALRHSNPRAEA) the composition is skewed to basic and acidic residues.

This sequence belongs to the raftlin family. In terms of assembly, interacts with TLR4; the interaction occurs in response to lipopolysaccharide stimulation. Interacts with CLTC; the interaction occurs in response to pathogens. Interacts with AP2A1 and AP2B1. Expressed in T-cells, B-cells, thymus and spleen (at protein level). Expressed in dendritic cells, macrophages, heart, lung and small intestine.

The protein resides in the cell membrane. It is found in the cytoplasm. It localises to the membrane raft. Its subcellular location is the endosome. The protein localises to the early endosome. In terms of biological role, involved in protein trafficking via association with clathrin and AP2 complex. Upon bacterial lipopolysaccharide stimulation, mediates internalization of TLR4 to endosomes in dendritic cells and macrophages, and internalization of poly(I:C) to TLR3-positive endosomes in myeloid dendritic cells and epithelial cells; resulting in activation of TICAM1-mediated signaling and subsequent IFNB1 production. Involved in T-cell antigen receptor-mediated signaling by regulating tyrosine kinase LCK localization, T-cell dependent antibody production and cytokine secretion. May regulate B-cell antigen receptor-mediated signaling. May play a pivotal role in the formation and/or maintenance of lipid rafts. The polypeptide is Raftlin (Rftn1) (Mus musculus (Mouse)).